A 614-amino-acid polypeptide reads, in one-letter code: UvrABC system protein C (614 aa).

Residues 26–104 (NLPGVYKMLG…IKEHRPPYNV (79 aa)) form the GIY-YIG domain. The UVR domain maps to 215–250 (SDIHTTLIEKMEHSAEALDFEKAAFYRDQLSMLREV).

Belongs to the UvrC family. In terms of assembly, interacts with UvrB in an incision complex.

The protein resides in the cytoplasm. The UvrABC repair system catalyzes the recognition and processing of DNA lesions. UvrC both incises the 5' and 3' sides of the lesion. The N-terminal half is responsible for the 3' incision and the C-terminal half is responsible for the 5' incision. In Psychrobacter sp. (strain PRwf-1), this protein is UvrABC system protein C.